Here is a 182-residue protein sequence, read N- to C-terminus: Probable RNA 2'-phosphotransferase (182 aa).

This sequence belongs to the KptA/TPT1 family.

Removes the 2'-phosphate from RNA via an intermediate in which the phosphate is ADP-ribosylated by NAD followed by a presumed transesterification to release the RNA and generate ADP-ribose 1''-2''-cyclic phosphate (APPR&gt;P). May function as an ADP-ribosylase. This chain is Probable RNA 2'-phosphotransferase, found in Flavobacterium johnsoniae (strain ATCC 17061 / DSM 2064 / JCM 8514 / BCRC 14874 / CCUG 350202 / NBRC 14942 / NCIMB 11054 / UW101) (Cytophaga johnsonae).